Reading from the N-terminus, the 240-residue chain is Protein Thf1 (240 aa).

Positions 186–222 (KDLDLYRSNLEKVDQLLKVLEDAAEAERKKKEKQAAS) form a coiled coil. A disordered region spans residues 212-240 (ERKKKEKQAASTTPAIEEAPVTTAESSES).

Belongs to the THF1 family.

May be involved in photosynthetic membrane biogenesis. This chain is Protein Thf1, found in Synechocystis sp. (strain ATCC 27184 / PCC 6803 / Kazusa).